Reading from the N-terminus, the 311-residue chain is Ribonuclease 3 (311 aa).

Positions 20–145 (YLCFYRILGF…FIGAIYLDQG (126 aa)) constitute an RNase III domain. Glu-62 serves as a coordination point for Mg(2+). The active site involves Asp-66. 2 residues coordinate Mg(2+): Asn-131 and Glu-134. The active site involves Glu-134. Residues 173-242 (NFKSKLIEWS…AQMAIKKVKD (70 aa)) form the DRBM domain. The disordered stretch occupies residues 250–311 (NEAKSQHSKP…EVEATETEKE (62 aa)). Acidic residues predominate over residues 262 to 288 (VETESVEPELTESETMEPDTLETEAPE).

This sequence belongs to the ribonuclease III family. Homodimer. The cofactor is Mg(2+).

The protein resides in the cytoplasm. It carries out the reaction Endonucleolytic cleavage to 5'-phosphomonoester.. Functionally, digests double-stranded RNA. Involved in the processing of primary rRNA transcript to yield the immediate precursors to the large and small rRNAs (23S and 16S). Processes some mRNAs, and tRNAs when they are encoded in the rRNA operon. Processes pre-crRNA and tracrRNA of type II CRISPR loci if present in the organism. This Bacteroides thetaiotaomicron (strain ATCC 29148 / DSM 2079 / JCM 5827 / CCUG 10774 / NCTC 10582 / VPI-5482 / E50) protein is Ribonuclease 3.